A 447-amino-acid chain; its full sequence is Tubulin beta-1 chain (447 aa).

The GTP site is built by Gln11, Glu69, Ser138, Gly142, Thr143, Gly144, Asn204, and Asn226. Glu69 contributes to the Mg(2+) binding site. Positions Ala411–Asp427 are enriched in polar residues. Residues Ala411–Glu447 are disordered. A compositionally biased stretch (acidic residues) spans Thr429 to Glu447.

The protein belongs to the tubulin family. In terms of assembly, dimer of alpha and beta chains. A typical microtubule is a hollow water-filled tube with an outer diameter of 25 nm and an inner diameter of 15 nM. Alpha-beta heterodimers associate head-to-tail to form protofilaments running lengthwise along the microtubule wall with the beta-tubulin subunit facing the microtubule plus end conferring a structural polarity. Microtubules usually have 13 protofilaments but different protofilament numbers can be found in some organisms and specialized cells. The cofactor is Mg(2+). In terms of tissue distribution, expressed in leaf sheaths.

The protein localises to the cytoplasm. It localises to the cytoskeleton. In terms of biological role, tubulin is the major constituent of microtubules, a cylinder consisting of laterally associated linear protofilaments composed of alpha- and beta-tubulin heterodimers. Microtubules grow by the addition of GTP-tubulin dimers to the microtubule end, where a stabilizing cap forms. Below the cap, tubulin dimers are in GDP-bound state, owing to GTPase activity of alpha-tubulin. This is Tubulin beta-1 chain (TUBB1) from Oryza sativa subsp. japonica (Rice).